We begin with the raw amino-acid sequence, 349 residues long: Hydroxymethylglutaryl-CoA synthase (349 aa).

The (3S)-3-hydroxy-3-methylglutaryl-CoA site is built by Asp29 and Ala30. The active-site Proton donor/acceptor is Glu81. Residues Cys113 and Thr154 each coordinate (3S)-3-hydroxy-3-methylglutaryl-CoA. Cys113 serves as the catalytic Acyl-thioester intermediate. Arg202 is a CoA binding site. Thr204 and His237 together coordinate (3S)-3-hydroxy-3-methylglutaryl-CoA. The active-site Proton donor/acceptor is His237. Lys242 provides a ligand contact to CoA. Positions 246, 269, and 299 each coordinate (3S)-3-hydroxy-3-methylglutaryl-CoA.

The protein belongs to the thiolase-like superfamily. Archaeal HMG-CoA synthase family. As to quaternary structure, interacts with acetoacetyl-CoA thiolase that catalyzes the precedent step in the pathway and with a DUF35 protein. The acetoacetyl-CoA thiolase/HMG-CoA synthase complex channels the intermediate via a fused CoA-binding site, which allows for efficient coupling of the endergonic thiolase reaction with the exergonic HMGCS reaction.

The catalysed reaction is acetoacetyl-CoA + acetyl-CoA + H2O = (3S)-3-hydroxy-3-methylglutaryl-CoA + CoA + H(+). It participates in metabolic intermediate biosynthesis; (R)-mevalonate biosynthesis; (R)-mevalonate from acetyl-CoA: step 2/3. Its function is as follows. Catalyzes the condensation of acetyl-CoA with acetoacetyl-CoA to form 3-hydroxy-3-methylglutaryl-CoA (HMG-CoA). Functions in the mevalonate (MVA) pathway leading to isopentenyl diphosphate (IPP), a key precursor for the biosynthesis of isoprenoid compounds that are building blocks of archaeal membrane lipids. The sequence is that of Hydroxymethylglutaryl-CoA synthase from Methanosarcina acetivorans (strain ATCC 35395 / DSM 2834 / JCM 12185 / C2A).